Here is a 347-residue protein sequence, read N- to C-terminus: (RS)-norcoclaurine 6-O-methyltransferase (347 aa).

S-adenosyl-L-methionine contacts are provided by Gly-192, Asp-215, Asp-235, Met-236, and Lys-249. His-253 (proton acceptor) is an active-site residue.

It belongs to the class I-like SAM-binding methyltransferase superfamily. Cation-independent O-methyltransferase family. COMT subfamily. Homodimer.

It catalyses the reaction norcoclaurine + S-adenosyl-L-methionine = coclaurine + S-adenosyl-L-homocysteine + H(+). Its pathway is alkaloid biosynthesis; (S)-reticuline biosynthesis; (S)-reticuline from (S)-norcoclaurine: step 1/4. Its function is as follows. Catalyzes the transfer of the S-methyl group of S-adenosyl-L-methionine (AdoMet) to the 6-hydroxyl group of norcoclaurine to form coclaurine. This chain is (RS)-norcoclaurine 6-O-methyltransferase, found in Coptis japonica (Japanese goldthread).